A 49-amino-acid polypeptide reads, in one-letter code: Large ribosomal subunit protein bL33B (49 aa).

It belongs to the bacterial ribosomal protein bL33 family.

The polypeptide is Large ribosomal subunit protein bL33B (Bacillus anthracis).